The sequence spans 303 residues: Centromere protein O (303 aa).

A coiled-coil region spans residues 38–77; it reads AALRKNQELVLELRKKRDELKAKIERHKAEIQAFRGREEA.

The protein belongs to the CENP-O/MCM21 family.

It localises to the nucleus. The protein localises to the chromosome. The protein resides in the centromere. In terms of biological role, probable component of a centromeric complex involved in assembly of kinetochore proteins, mitotic progression and chromosome segregation. The polypeptide is Centromere protein O (cenpo) (Xenopus tropicalis (Western clawed frog)).